We begin with the raw amino-acid sequence, 127 residues long: Glycine cleavage system H protein (127 aa).

The region spanning 27–109 is the Lipoyl-binding domain; sequence TVRVGITHIA…YGEGWLYEVK (83 aa). Lys-68 is modified (N6-lipoyllysine).

Belongs to the GcvH family. In terms of assembly, the glycine cleavage system is composed of four proteins: P, T, L and H. (R)-lipoate serves as cofactor.

Functionally, the glycine cleavage system catalyzes the degradation of glycine. The H protein shuttles the methylamine group of glycine from the P protein to the T protein. This Corynebacterium jeikeium (strain K411) protein is Glycine cleavage system H protein.